The following is a 240-amino-acid chain: RING finger protein 151 (240 aa).

The RING-type zinc finger occupies 20 to 58 (CSVCHGVLKRPVRLPCSHIFCKKCILRWLARQKTCPCCR). A TRAF-type zinc finger spans residues 101-156 (GHQDSCPFELMVCPNEGCMLRVPRGALDEHRQNCQHGAYHRCSLGCGATLGPVERA).

The protein is RING finger protein 151 (RNF151) of Bos taurus (Bovine).